Here is a 301-residue protein sequence, read N- to C-terminus: Probable enoyl-CoA hydratase 2, mitochondrial (301 aa).

The N-terminal 32 residues, 1–32 (MSFVKYLRRDNLLQLAGKPSLSRNYILQTCRT), are a transit peptide targeting the mitochondrion. Residues 105-109 (AGADL) and Gly152 each bind substrate.

It belongs to the enoyl-CoA hydratase/isomerase family.

It localises to the mitochondrion. The catalysed reaction is a (3S)-3-hydroxyacyl-CoA = a (2E)-enoyl-CoA + H2O. It catalyses the reaction a 4-saturated-(3S)-3-hydroxyacyl-CoA = a (3E)-enoyl-CoA + H2O. Its pathway is lipid metabolism; fatty acid beta-oxidation. Straight-chain enoyl-CoA thioesters from C4 up to at least C16 are processed, although with decreasing catalytic rate. In Arabidopsis thaliana (Mouse-ear cress), this protein is Probable enoyl-CoA hydratase 2, mitochondrial.